Consider the following 103-residue polypeptide: Carboxysome shell protein CsoS1 (103 aa).

The region spanning 9 to 94 (ALGMIETRGL…PHREVEPALG (86 aa)) is the BMC domain.

The protein belongs to the bacterial microcompartments protein family. CsoS1 subfamily. As to quaternary structure, homohexamer with a small central pore. Forms a CsoS2-CsoS1-RuBisCO complex.

The protein resides in the carboxysome. In terms of biological role, one of the shell proteins of the carboxysome, a polyhedral inclusion where RuBisCO (ribulose bisphosphate carboxylase, ccbL-ccbS) is sequestered. Assembles into hexamers which make sheets that form the facets of the polyhedral carboxysome. The sequence is that of Carboxysome shell protein CsoS1 from Prochlorococcus marinus (strain MIT 9313).